The primary structure comprises 646 residues: Chaperone protein DnaK (646 aa).

Thr198 carries the phosphothreonine; by autocatalysis modification. The segment at 603–646 (EQAQQAGGAEGFDPNAFQGGDAGQQKADDGVVDAEFTEVKDDKK) is disordered. Over residues 618-627 (AFQGGDAGQQ) the composition is skewed to low complexity.

It belongs to the heat shock protein 70 family.

Functionally, acts as a chaperone. The polypeptide is Chaperone protein DnaK (Acinetobacter baumannii (strain ACICU)).